Consider the following 648-residue polypeptide: Serine/threonine-protein kinase PrkC (648 aa).

Residues 1 to 330 (MLIGKRISGR…KKNGKRKKWP (330 aa)) are Cytoplasmic-facing. Residues 11 to 271 (YQILRVIGGG…DMEADIKTAF (261 aa)) enclose the Protein kinase domain. Residues 17-25 (IGGGGMANV) and K40 contribute to the ATP site. The active-site Proton acceptor is the D134. A phosphothreonine; by autocatalysis mark is found at T162, T163, T165, and T167. Position 214 is a phosphoserine; by autocatalysis (S214). Phosphothreonine; by autocatalysis is present on residues T290, T313, and T320. A helical transmembrane segment spans residues 331–351 (WVLLTICLVFITAGILAVTVF). Residues 352–648 (PSLFMPKDVK…YKTIEYPKDE (297 aa)) are Extracellular-facing. PASTA domains are found at residues 356 to 424 (MPKD…YKST), 425 to 492 (GKAK…TVSI), and 493 to 559 (GPED…TFSL).

Belongs to the protein kinase superfamily. Ser/Thr protein kinase family. In terms of assembly, homodimer. Post-translationally, autophosphorylation on threonine residue(s) and serine residue considerably increases the kinase activity of the protein. Dephosphorylated in vitro by PrpC.

The protein localises to the spore membrane. It carries out the reaction L-seryl-[protein] + ATP = O-phospho-L-seryl-[protein] + ADP + H(+). The catalysed reaction is L-threonyl-[protein] + ATP = O-phospho-L-threonyl-[protein] + ADP + H(+). Its activity is regulated as follows. Bryostatin activates PrkC activity and induces germination, whereas staurosporine inhibits PrkC and significantly reduced peptidoglycan-dependent germination. Kinase activity of isolated N-terminus stimulated by poly-L-lysine or myelin basic protein. Functionally, protein kinase that is responsible for triggering spore germination in response to muropeptides, signaling bacteria to exit dormancy. PrkC is thus a germination receptor that binds peptidoglycan fragments containing m-Dpm (meso-diaminopimelate), which act as spore germinants. Autophosphorylates and phosphorylates EF-G (elongation factor G, fusA); the latter modification is likely necessary for germination in response to peptidoglycan. Another group did not detect phosphorylation of EF-G. PrkC is a substrate in vitro of the cotranscribed phosphatase PrpC, which suggests that they form a functional couple in vivo. Might also be involved in sporulation and biofilm formation. Does not seem to be involved in stress response. The chain is Serine/threonine-protein kinase PrkC (prkC) from Bacillus subtilis (strain 168).